A 359-amino-acid polypeptide reads, in one-letter code: Probable D-xylulose reductase A (359 aa).

Zn(2+)-binding residues include Cys47, His72, and Glu73. Position 182–187 (182–187 (GAGPVG)) interacts with NAD(+).

This sequence belongs to the zinc-containing alcohol dehydrogenase family. Requires Zn(2+) as cofactor.

It catalyses the reaction xylitol + NAD(+) = D-xylulose + NADH + H(+). It functions in the pathway carbohydrate degradation; L-arabinose degradation via L-arabinitol; D-xylulose 5-phosphate from L-arabinose (fungal route): step 4/5. Functionally, xylitol dehydrogenase which catalyzes the conversion of xylitol to D-xylulose. Xylose is a major component of hemicelluloses such as xylan. Most fungi utilize D-xylose via three enzymatic reactions, xylose reductase (XR), xylitol dehydrogenase (XDH), and xylulokinase, to form xylulose 5-phosphate, which enters pentose phosphate pathway. This Emericella nidulans (strain FGSC A4 / ATCC 38163 / CBS 112.46 / NRRL 194 / M139) (Aspergillus nidulans) protein is Probable D-xylulose reductase A (xdhA).